We begin with the raw amino-acid sequence, 239 residues long: Pyrroloquinoline-quinone synthase (239 aa).

The protein belongs to the PqqC family.

It carries out the reaction 6-(2-amino-2-carboxyethyl)-7,8-dioxo-1,2,3,4,7,8-hexahydroquinoline-2,4-dicarboxylate + 3 O2 = pyrroloquinoline quinone + 2 H2O2 + 2 H2O + H(+). It participates in cofactor biosynthesis; pyrroloquinoline quinone biosynthesis. Its function is as follows. Ring cyclization and eight-electron oxidation of 3a-(2-amino-2-carboxyethyl)-4,5-dioxo-4,5,6,7,8,9-hexahydroquinoline-7,9-dicarboxylic-acid to PQQ. The sequence is that of Pyrroloquinoline-quinone synthase from Gluconobacter oxydans (strain 621H) (Gluconobacter suboxydans).